A 689-amino-acid polypeptide reads, in one-letter code: MADNLVIVESPAKAKTIEKYLGKKYKVIASMGHVRDLPRSQMGVDTEDNYEPKYITIRGKGPVVKELKKHAKKAKNVFLASDPDREGEAIAWHLSKILELEDSKENRVVFNEITKDAVKESFKNPREIEMNLVDAQQARRILDRLVGYNISPVLWKKVKKGLSAGRVQSVALRLVIDRENEIRNFKPEEYWTIEGEFRYKKSKFNAKFLHYKNKPFKLKTKKDVEKITAALDGDQFEITNVTKKEKTRNPANPFTTSTLQQEAARKLNFKARKTMMVAQQLYEGIDLKKQGTIGLITYMRTDSTRISDTAKAEAKQYITDKYGESYTSKRKASGKQGDQDAHEAIRPSSTMRTPDDMKSFLTKDQYRLYKLIWERFVASQMAPAILDTVSLDITQGDIKFRANGQTIKFKGFMTLYVETKDDSDSEKENKLPKLEQGDKVTATQIEPAQHYTQPPPRYTEARLVKTLEELKIGRPSTYAPTIDTIQKRNYVKLESKRFVPTELGEIVHEQVKEYFPEIIDVEFTVNMETLLDKIAEGDITWRKVIDGFFSSFKQDVERAEEEMEKIEIKDEPAGEDCEVCGSPMVIKMGRYGKFMACSNFPDCRNTKAIVKSIGVKCPKCNDGDVVERKSKKNRVFYGCSKYPECDFISWDKPIGRDCPKCNQYLVENKKGKTTQVICSNCDYKEAAQK.

The Toprim domain occupies 3–113 (DNLVIVESPA…KENRVVFNEI (111 aa)). Mg(2+)-binding residues include Glu-9 and Asp-82. The 429-residue stretch at 129–557 (EMNLVDAQQA…FFSSFKQDVE (429 aa)) folds into the Topo IA-type catalytic domain. An interaction with DNA region spans residues 163–168 (SAGRVQ). Tyr-298 acts as the O-(5'-phospho-DNA)-tyrosine intermediate in catalysis. A disordered region spans residues 328–357 (SKRKASGKQGDQDAHEAIRPSSTMRTPDDM). 3 consecutive C4-type zinc fingers follow at residues 577-603 (CEVCGSPMVIKMGRYGKFMACSNFPDC), 617-645 (CPKCNDGDVVERKSKKNRVFYGCSKYPEC), and 658-681 (CPKCNQYLVENKKGKTTQVICSNC).

It belongs to the type IA topoisomerase family. In terms of assembly, monomer. Mg(2+) serves as cofactor.

It carries out the reaction ATP-independent breakage of single-stranded DNA, followed by passage and rejoining.. Releases the supercoiling and torsional tension of DNA, which is introduced during the DNA replication and transcription, by transiently cleaving and rejoining one strand of the DNA duplex. Introduces a single-strand break via transesterification at a target site in duplex DNA. The scissile phosphodiester is attacked by the catalytic tyrosine of the enzyme, resulting in the formation of a DNA-(5'-phosphotyrosyl)-enzyme intermediate and the expulsion of a 3'-OH DNA strand. The free DNA strand then undergoes passage around the unbroken strand, thus removing DNA supercoils. Finally, in the religation step, the DNA 3'-OH attacks the covalent intermediate to expel the active-site tyrosine and restore the DNA phosphodiester backbone. This chain is DNA topoisomerase 1, found in Staphylococcus aureus (strain N315).